The primary structure comprises 270 residues: 4-hydroxy-tetrahydrodipicolinate reductase (270 aa).

NAD(+)-binding positions include 11 to 16 and Glu-37; that span reads GCNGRM. Arg-38 contributes to the NADP(+) binding site. Residues 101–103 and 125–128 each bind NAD(+); these read GTT and ASNY. His-158 acts as the Proton donor/acceptor in catalysis. His-159 lines the (S)-2,3,4,5-tetrahydrodipicolinate pocket. The active-site Proton donor is the Lys-162. 168–169 provides a ligand contact to (S)-2,3,4,5-tetrahydrodipicolinate; the sequence is GT.

This sequence belongs to the DapB family.

The protein resides in the cytoplasm. The enzyme catalyses (S)-2,3,4,5-tetrahydrodipicolinate + NAD(+) + H2O = (2S,4S)-4-hydroxy-2,3,4,5-tetrahydrodipicolinate + NADH + H(+). It catalyses the reaction (S)-2,3,4,5-tetrahydrodipicolinate + NADP(+) + H2O = (2S,4S)-4-hydroxy-2,3,4,5-tetrahydrodipicolinate + NADPH + H(+). Its pathway is amino-acid biosynthesis; L-lysine biosynthesis via DAP pathway; (S)-tetrahydrodipicolinate from L-aspartate: step 4/4. Its function is as follows. Catalyzes the conversion of 4-hydroxy-tetrahydrodipicolinate (HTPA) to tetrahydrodipicolinate. This chain is 4-hydroxy-tetrahydrodipicolinate reductase, found in Aeromonas salmonicida (strain A449).